The sequence spans 298 residues: Tyrosine recombinase XerD (298 aa).

Positions 2 to 87 (KQELARIEQF…AVRRLFQYLY (86 aa)) constitute a Core-binding (CB) domain. Positions 108–292 (RLPKDLSEAQ…ATERLRQLHQ (185 aa)) constitute a Tyr recombinase domain. Residues arginine 148, lysine 172, histidine 244, arginine 247, and histidine 270 contribute to the active site. The active-site O-(3'-phospho-DNA)-tyrosine intermediate is tyrosine 279.

It belongs to the 'phage' integrase family. XerD subfamily. Forms a cyclic heterotetrameric complex composed of two molecules of XerC and two molecules of XerD, in which XerC interacts with XerD via its C-terminal region, XerD interacts with XerC via its C-terminal region and so on.

The protein resides in the cytoplasm. FtsK may regulate the catalytic switch between XerC and XerD in the heterotetrameric complex during the two steps of the recombination process. Functionally, site-specific tyrosine recombinase, which acts by catalyzing the cutting and rejoining of the recombining DNA molecules. Binds cooperatively to specific DNA consensus sequences that are separated from XerC binding sites by a short central region, forming the heterotetrameric XerC-XerD complex that recombines DNA substrates. The complex is essential to convert dimers of the bacterial chromosome into monomers to permit their segregation at cell division. It also contributes to the segregational stability of plasmids. In the complex XerD specifically exchanges the bottom DNA strands. The protein is Tyrosine recombinase XerD of Shigella flexneri.